Here is a 248-residue protein sequence, read N- to C-terminus: Regulator of G-protein signaling 7-binding protein A (248 aa).

The tract at residues Met-1–Arg-32 is disordered. 2 S-palmitoyl cysteine lipidation sites follow: Cys-243 and Cys-244.

It belongs to the RGS7BP/RGS9BP family. In terms of processing, palmitoylated. Undergoes rapid palmitoylation turnover. Palmitoylation regulates the cell membrane and nuclear shuttling and the regulation of GPCR signaling. Upon depalmitoylation, it is targeted from the plasma membrane into the nucleus. GPCR signaling inhibits depalmitoylation and promotes localization to the plasma membrane.

The protein localises to the nucleus. The protein resides in the cytoplasm. It is found in the cell membrane. Functionally, regulator of G protein-coupled receptor (GPCR) signaling. Regulatory subunit of the R7-Gbeta5 complexes that acts by controlling the subcellular location of the R7-Gbeta5 complexes. When palmitoylated, it targets the R7-Gbeta5 complexes to the plasma membrane, leading to inhibit G protein alpha subunits. When it is unpalmitoylated, the R7-Gbeta5 complexes undergo a nuclear/cytoplasmic shuttling. In Danio rerio (Zebrafish), this protein is Regulator of G-protein signaling 7-binding protein A (rgs7bpa).